Consider the following 177-residue polypeptide: Apoptosis regulatory protein Siva (177 aa).

Y34 is modified (phosphotyrosine; by ABL2). Positions 36–55 are interaction with BCL2L1 isoform Bcl-x(L) and inhibition of BCL2L1 anti-apoptotic activity; it reads REVFERTKQLLFQGAQAYRD.

As to quaternary structure, binds through its N-terminal region to the C-terminus of CD27 and to PXMP2/PMP22. Binds to the C-terminus of TNFRSF18/GITR. Binds to BCL2L1/BCLX isoform Bcl-x(L) but not to BAX. Requires Zn(2+) as cofactor. In post-ischemic kidney, found in cells lining the S3 segment of proximal tubules at 12 hours and 1 day post-ischemia. At five and seven days post-ischemia, found in epithelial cells of papillary proliferations in regenerating tubules.

It localises to the cytoplasm. The protein resides in the nucleus. In terms of biological role, induces CD27-mediated apoptosis. Inhibits BCL2L1 isoform Bcl-x(L) anti-apoptotic activity. Inhibits activation of NF-kappa-B and promotes T-cell receptor-mediated apoptosis. This chain is Apoptosis regulatory protein Siva (Siva1), found in Rattus norvegicus (Rat).